The sequence spans 340 residues: Dihydroorotase (340 aa).

Zn(2+) is bound by residues His14 and His16. Substrate-binding positions include 16–18 and Asn42; that span reads HLR. Residues Lys100, His137, and His175 each coordinate Zn(2+). Lys100 bears the N6-carboxylysine mark. A substrate-binding site is contributed by His137. Leu220 is a binding site for substrate. Asp248 lines the Zn(2+) pocket. Residue Asp248 is part of the active site. Substrate-binding residues include His252 and Ala264.

The protein belongs to the metallo-dependent hydrolases superfamily. DHOase family. Class II DHOase subfamily. As to quaternary structure, homodimer. The cofactor is Zn(2+).

The enzyme catalyses (S)-dihydroorotate + H2O = N-carbamoyl-L-aspartate + H(+). The protein operates within pyrimidine metabolism; UMP biosynthesis via de novo pathway; (S)-dihydroorotate from bicarbonate: step 3/3. Catalyzes the reversible cyclization of carbamoyl aspartate to dihydroorotate. This chain is Dihydroorotase, found in Sphingopyxis alaskensis (strain DSM 13593 / LMG 18877 / RB2256) (Sphingomonas alaskensis).